A 260-amino-acid chain; its full sequence is Global transcriptional regulator CodY (260 aa).

Residues 1-159 form a GAF domain region; it reads MPNLLEKTRK…SSTVVGIQLL (159 aa). The H-T-H motif DNA-binding region spans 207 to 226; the sequence is ASVIADRIGITRSVIVNALR.

Belongs to the CodY family.

It is found in the cytoplasm. DNA-binding global transcriptional regulator which is involved in the adaptive response to starvation and acts by directly or indirectly controlling the expression of numerous genes in response to nutrient availability. During rapid exponential growth, CodY is highly active and represses genes whose products allow adaptation to nutrient depletion. This is Global transcriptional regulator CodY from Streptococcus pyogenes serotype M4 (strain MGAS10750).